Here is a 205-residue protein sequence, read N- to C-terminus: N-(5'-phosphoribosyl)anthranilate isomerase (205 aa).

This sequence belongs to the TrpF family.

The catalysed reaction is N-(5-phospho-beta-D-ribosyl)anthranilate = 1-(2-carboxyphenylamino)-1-deoxy-D-ribulose 5-phosphate. The protein operates within amino-acid biosynthesis; L-tryptophan biosynthesis; L-tryptophan from chorismate: step 3/5. The sequence is that of N-(5'-phosphoribosyl)anthranilate isomerase from Thiobacillus denitrificans (strain ATCC 25259 / T1).